Reading from the N-terminus, the 55-residue chain is Large ribosomal subunit protein bL33 (55 aa).

It belongs to the bacterial ribosomal protein bL33 family.

The polypeptide is Large ribosomal subunit protein bL33 (Burkholderia cenocepacia (strain ATCC BAA-245 / DSM 16553 / LMG 16656 / NCTC 13227 / J2315 / CF5610) (Burkholderia cepacia (strain J2315))).